A 201-amino-acid polypeptide reads, in one-letter code: 3-isopropylmalate dehydratase small subunit (201 aa).

Belongs to the LeuD family. LeuD type 1 subfamily. In terms of assembly, heterodimer of LeuC and LeuD.

The enzyme catalyses (2R,3S)-3-isopropylmalate = (2S)-2-isopropylmalate. It functions in the pathway amino-acid biosynthesis; L-leucine biosynthesis; L-leucine from 3-methyl-2-oxobutanoate: step 2/4. Catalyzes the isomerization between 2-isopropylmalate and 3-isopropylmalate, via the formation of 2-isopropylmaleate. This is 3-isopropylmalate dehydratase small subunit from Shigella dysenteriae serotype 1 (strain Sd197).